Consider the following 359-residue polypeptide: Membrane-bound lytic murein transglycosylase C (359 aa).

An N-terminal signal peptide occupies residues 1 to 16 (MKKYLALALIAPLLIS). Cys-17 is lipidated: N-palmitoyl cysteine. A lipid anchor (S-diacylglycerol cysteine) is attached at Cys-17.

It belongs to the transglycosylase Slt family.

The protein localises to the cell outer membrane. It catalyses the reaction Exolytic cleavage of the (1-&gt;4)-beta-glycosidic linkage between N-acetylmuramic acid (MurNAc) and N-acetylglucosamine (GlcNAc) residues in peptidoglycan, from either the reducing or the non-reducing ends of the peptidoglycan chains, with concomitant formation of a 1,6-anhydrobond in the MurNAc residue.. In terms of biological role, murein-degrading enzyme. May play a role in recycling of muropeptides during cell elongation and/or cell division. The sequence is that of Membrane-bound lytic murein transglycosylase C from Escherichia coli O7:K1 (strain IAI39 / ExPEC).